Consider the following 61-residue polypeptide: uncharacterized protein (61 aa).

This is an uncharacterized protein from Escherichia coli (strain K12).